Here is a 108-residue protein sequence, read N- to C-terminus: UPF0060 membrane protein YnfA (108 aa).

The Periplasmic portion of the chain corresponds to 1–5 (MIKTT). A helical transmembrane segment spans residues 6–26 (LLFFATALCEIIGCFLPWLWL). Over 27-30 (KRNA) the chain is Cytoplasmic. A helical membrane pass occupies residues 31 to 51 (SIWLLLPAGISLALFVWLLTL). Residues 52 to 60 (HPAASGRVY) lie on the Periplasmic side of the membrane. A helical transmembrane segment spans residues 61-81 (AAYGGVYVCTALMWLRVVDGV). The Cytoplasmic segment spans residues 82-84 (KLT). A helical membrane pass occupies residues 85-105 (LYDWTGPLIALCGMLIIVVGW). Residues 106 to 108 (GRT) lie on the Periplasmic side of the membrane.

It belongs to the UPF0060 family.

It localises to the cell inner membrane. This chain is UPF0060 membrane protein YnfA, found in Escherichia coli O157:H7.